The following is a 147-amino-acid chain: Small ribosomal subunit protein uS5 (147 aa).

The S5 DRBM domain occupies 9-72 (FEEVVVNISR…DNAFKNITTV (64 aa)).

Belongs to the universal ribosomal protein uS5 family. Part of the 30S ribosomal subunit. Contacts proteins S4 and S8.

Its function is as follows. With S4 and S12 plays an important role in translational accuracy. Functionally, located at the back of the 30S subunit body where it stabilizes the conformation of the head with respect to the body. This chain is Small ribosomal subunit protein uS5, found in Nitratiruptor sp. (strain SB155-2).